The following is a 217-amino-acid chain: Uridylate kinase (217 aa).

6-10 (KLSGR) contacts ATP. A UMP-binding site is contributed by glycine 38. Residues glycine 39 and arginine 43 each coordinate ATP. UMP-binding positions include aspartate 60 and 107-113 (FQPGQST). Residues asparagine 134, tyrosine 139, and aspartate 142 each coordinate ATP.

This sequence belongs to the UMP kinase family. As to quaternary structure, homohexamer.

Its subcellular location is the cytoplasm. The catalysed reaction is UMP + ATP = UDP + ADP. Its pathway is pyrimidine metabolism; CTP biosynthesis via de novo pathway; UDP from UMP (UMPK route): step 1/1. Inhibited by UTP. In terms of biological role, catalyzes the reversible phosphorylation of UMP to UDP. This is Uridylate kinase from Pyrobaculum islandicum (strain DSM 4184 / JCM 9189 / GEO3).